The primary structure comprises 223 residues: Orotate phosphoribosyltransferase (223 aa).

5-phospho-alpha-D-ribose 1-diphosphate is bound by residues R107, K108, K111, H113, and 133–141 (EDLTTAGGS). T137 provides a ligand contact to orotate. Residues 192–211 (SPGSRSSSTTRRCRKSSPSS) show a composition bias toward low complexity. The interval 192–212 (SPGSRSSSTTRRCRKSSPSSM) is disordered.

It belongs to the purine/pyrimidine phosphoribosyltransferase family. PyrE subfamily. In terms of assembly, homodimer. Requires Mg(2+) as cofactor.

The enzyme catalyses orotidine 5'-phosphate + diphosphate = orotate + 5-phospho-alpha-D-ribose 1-diphosphate. It functions in the pathway pyrimidine metabolism; UMP biosynthesis via de novo pathway; UMP from orotate: step 1/2. Catalyzes the transfer of a ribosyl phosphate group from 5-phosphoribose 1-diphosphate to orotate, leading to the formation of orotidine monophosphate (OMP). This is Orotate phosphoribosyltransferase (pyrE) from Rhizobium leguminosarum bv. trifolii.